Reading from the N-terminus, the 446-residue chain is Beta-glucosidase A (446 aa).

Glu166 (proton donor) is an active-site residue. The Nucleophile role is filled by Glu351.

This sequence belongs to the glycosyl hydrolase 1 family.

It catalyses the reaction Hydrolysis of terminal, non-reducing beta-D-glucosyl residues with release of beta-D-glucose.. It functions in the pathway glycan metabolism; cellulose degradation. The polypeptide is Beta-glucosidase A (bglA) (Thermotoga maritima (strain ATCC 43589 / DSM 3109 / JCM 10099 / NBRC 100826 / MSB8)).